Here is a 1360-residue protein sequence, read N- to C-terminus: DNA-directed RNA polymerase subunit beta (1360 aa).

It belongs to the RNA polymerase beta chain family. The RNAP catalytic core consists of 2 alpha, 1 beta, 1 beta' and 1 omega subunit. When a sigma factor is associated with the core the holoenzyme is formed, which can initiate transcription.

The catalysed reaction is RNA(n) + a ribonucleoside 5'-triphosphate = RNA(n+1) + diphosphate. Functionally, DNA-dependent RNA polymerase catalyzes the transcription of DNA into RNA using the four ribonucleoside triphosphates as substrates. The protein is DNA-directed RNA polymerase subunit beta of Caulobacter sp. (strain K31).